We begin with the raw amino-acid sequence, 237 residues long: Putative glutathione-dependent formaldehyde-activating enzyme (237 aa).

The CENP-V/GFA domain maps to 38 to 152; it reads ITLICHCPPS…LGQSGGSEGE (115 aa). Positions 42, 44, 67, 69, 72, 114, and 117 each coordinate Zn(2+).

It belongs to the Gfa family. Zn(2+) serves as cofactor.

The catalysed reaction is S-(hydroxymethyl)glutathione = glutathione + formaldehyde. It functions in the pathway one-carbon metabolism; formaldehyde degradation; formate from formaldehyde (glutathione route): step 1/3. Catalyzes the condensation of formaldehyde and glutathione to S-hydroxymethylglutathione. In Sordaria macrospora (strain ATCC MYA-333 / DSM 997 / K(L3346) / K-hell), this protein is Putative glutathione-dependent formaldehyde-activating enzyme.